A 390-amino-acid chain; its full sequence is Sister chromatid cohesion protein DCC1 (390 aa).

The protein belongs to the DCC1 family. As to quaternary structure, component of the ctf18-RFC complex which consists of ctf18, ctf8, dscc1 and the RFC complex.

The protein localises to the nucleus. In terms of biological role, loads pcna onto primed templates regulating velocity, spacing and restart activity of replication forks. May couple DNA replication to sister chromatid cohesion. The protein is Sister chromatid cohesion protein DCC1 (dscc1) of Xenopus laevis (African clawed frog).